The sequence spans 425 residues: Putative E3 ubiquitin-protein ligase UBR7 (425 aa).

The segment at 44–116 (EKCSYSQGSV…KNLECKLFPD (73 aa)) adopts a UBR-type zinc-finger fold. The PHD-type; atypical zinc finger occupies 132–188 (GLYCVCKRPYPDPEDEVPDEMIQCVVCEDWFHGRHLGAIPPESGDFQEMVCQACMRR). The interval 212–269 (LPNATGMGDEDVSKPENGAPQDNGLKEDAPEHGRDSVNEVKAEQKNEPCSSSSSESDL) is disordered. Glycyl lysine isopeptide (Lys-Gly) (interchain with G-Cter in SUMO2) cross-links involve residues Lys-225 and Lys-252. Residues 235-257 (GLKEDAPEHGRDSVNEVKAEQKN) show a composition bias toward basic and acidic residues. Ser-264 is modified (phosphoserine). Glycyl lysine isopeptide (Lys-Gly) (interchain with G-Cter in SUMO2) cross-links involve residues Lys-274 and Lys-398.

Expressed in testis and sperm (at protein level).

The enzyme catalyses S-ubiquitinyl-[E2 ubiquitin-conjugating enzyme]-L-cysteine + [acceptor protein]-L-lysine = [E2 ubiquitin-conjugating enzyme]-L-cysteine + N(6)-ubiquitinyl-[acceptor protein]-L-lysine.. It participates in protein modification; protein ubiquitination. Functionally, E3 ubiquitin-protein ligase which is a component of the N-end rule pathway. Recognizes and binds to proteins bearing specific N-terminal residues that are destabilizing according to the N-end rule, leading to their ubiquitination and subsequent degradation. The chain is Putative E3 ubiquitin-protein ligase UBR7 (Ubr7) from Mus musculus (Mouse).